The sequence spans 214 residues: Guanylate kinase (214 aa).

Positions 6-192 (GTLYIISAPS…ALEDLKAIFR (187 aa)) constitute a Guanylate kinase-like domain. 13–20 (APSGAGKT) serves as a coordination point for ATP.

Belongs to the guanylate kinase family.

Its subcellular location is the cytoplasm. The enzyme catalyses GMP + ATP = GDP + ADP. In terms of biological role, essential for recycling GMP and indirectly, cGMP. This is Guanylate kinase from Pseudomonas savastanoi pv. phaseolicola (strain 1448A / Race 6) (Pseudomonas syringae pv. phaseolicola (strain 1448A / Race 6)).